The primary structure comprises 273 residues: 2-dehydro-3-deoxyphosphooctonate aldolase (273 aa).

Belongs to the KdsA family.

The protein localises to the cytoplasm. The catalysed reaction is D-arabinose 5-phosphate + phosphoenolpyruvate + H2O = 3-deoxy-alpha-D-manno-2-octulosonate-8-phosphate + phosphate. It functions in the pathway carbohydrate biosynthesis; 3-deoxy-D-manno-octulosonate biosynthesis; 3-deoxy-D-manno-octulosonate from D-ribulose 5-phosphate: step 2/3. The protein operates within bacterial outer membrane biogenesis; lipopolysaccharide biosynthesis. The chain is 2-dehydro-3-deoxyphosphooctonate aldolase from Geobacter sp. (strain M21).